The sequence spans 68 residues: Non-disulfide-bridged peptide 5.6 (68 aa).

The signal sequence occupies residues 1–23 (MKTQVIIFIMAVVFLQLLSQSEA). Positions 37–68 (ELRNIDLDQFDDMFDEPEISAADMRFLQELLK) are excised as a propeptide.

Belongs to the non-disulfide-bridged peptide (NDBP) superfamily. Short antimicrobial peptide (group 4) family. Expressed by the venom gland.

It localises to the secreted. The protein localises to the target cell membrane. Functionally, antibacterial peptide with activity against both Gram-positive and Gram-negative bacteria probably by forming pores in the cell membrane. Also has weak hemolytic activity. Does not show antifungal activity. The protein is Non-disulfide-bridged peptide 5.6 of Hoffmannihadrurus gertschi (Scorpion).